An 861-amino-acid chain; its full sequence is Leucine--tRNA ligase (861 aa).

Residues 42–52 (PYPSGKLHMGH) carry the 'HIGH' region motif. A 'KMSKS' region motif is present at residues 618-622 (KMSKS). Position 621 (lysine 621) interacts with ATP.

The protein belongs to the class-I aminoacyl-tRNA synthetase family.

It is found in the cytoplasm. It catalyses the reaction tRNA(Leu) + L-leucine + ATP = L-leucyl-tRNA(Leu) + AMP + diphosphate. The chain is Leucine--tRNA ligase from Buchnera aphidicola subsp. Baizongia pistaciae (strain Bp).